Consider the following 271-residue polypeptide: Histone chaperone asf-1 (271 aa).

The disordered stretch occupies residues 152–271; it reads KWDSEASAPP…PKQQGMAMAQ (120 aa). 2 stretches are compositionally biased toward acidic residues: residues 168 to 185 and 211 to 258; these read PEAD…DELA and IEED…EMEI.

It belongs to the ASF1 family. Interacts with histone H3 and histone H4.

The protein resides in the nucleus. In terms of biological role, histone chaperone that facilitates histone deposition and histone exchange and removal during nucleosome assembly and disassembly. This chain is Histone chaperone asf-1 (asf-1), found in Neurospora crassa (strain ATCC 24698 / 74-OR23-1A / CBS 708.71 / DSM 1257 / FGSC 987).